Here is a 199-residue protein sequence, read N- to C-terminus: Glycerol-3-phosphate acyltransferase (199 aa).

4 helical membrane passes run 2–22 (LEVL…GILV), 77–97 (PWVL…PVFL), 113–133 (IALA…VALA), and 139–159 (LAAM…GQPL).

The protein belongs to the PlsY family. In terms of assembly, probably interacts with PlsX.

The protein resides in the cell membrane. It carries out the reaction an acyl phosphate + sn-glycerol 3-phosphate = a 1-acyl-sn-glycero-3-phosphate + phosphate. It functions in the pathway lipid metabolism; phospholipid metabolism. Functionally, catalyzes the transfer of an acyl group from acyl-phosphate (acyl-PO(4)) to glycerol-3-phosphate (G3P) to form lysophosphatidic acid (LPA). This enzyme utilizes acyl-phosphate as fatty acyl donor, but not acyl-CoA or acyl-ACP. The sequence is that of Glycerol-3-phosphate acyltransferase from Rubrobacter xylanophilus (strain DSM 9941 / JCM 11954 / NBRC 16129 / PRD-1).